Here is a 216-residue protein sequence, read N- to C-terminus: Probable nicotinate-nucleotide adenylyltransferase (216 aa).

It belongs to the NadD family.

It carries out the reaction nicotinate beta-D-ribonucleotide + ATP + H(+) = deamido-NAD(+) + diphosphate. The protein operates within cofactor biosynthesis; NAD(+) biosynthesis; deamido-NAD(+) from nicotinate D-ribonucleotide: step 1/1. Functionally, catalyzes the reversible adenylation of nicotinate mononucleotide (NaMN) to nicotinic acid adenine dinucleotide (NaAD). This Geobacter sulfurreducens (strain ATCC 51573 / DSM 12127 / PCA) protein is Probable nicotinate-nucleotide adenylyltransferase.